Here is a 757-residue protein sequence, read N- to C-terminus: Chloride anion exchanger (757 aa).

Topologically, residues 1 to 71 (MIEAIGNQYV…SWLPAYKIKE (71 aa)) are cytoplasmic. A helical transmembrane segment spans residues 72-92 (WLLSDIVSGISTGLVAVLQGL). A topological domain (extracellular) is located at residue Ala-93. Residues 94-114 (FALLVNIPPAYGLYAAFFPVI) traverse the membrane as a helical segment. The Cytoplasmic segment spans residues 115-124 (TYFFLGTSRH). The helical transmembrane segment at 125 to 145 (ISVGPFPVLSMMVGVVVTRVA) threads the bilayer. The Extracellular segment spans residues 146 to 176 (SGSDTSPALSSSSAENDSMIEEKVMVAASVT). Asn-161 carries an N-linked (GlcNAc...) asparagine glycan. The helical transmembrane segment at 177 to 197 (VLSGIIQLLLGVLQIGFVVIY) threads the bilayer. At 198-201 (LSES) the chain is on the cytoplasmic side. The helical transmembrane segment at 202-222 (LISGFTTAAAIHVLVSQLKFM) threads the bilayer. The Extracellular portion of the chain corresponds to 223 to 250 (LQLTVPAHSDPFSIFKVLESVFSQIQKT). A helical membrane pass occupies residues 251–271 (NIADLVTSVIILVVVFVVKEI). Residues 272–278 (NQRYRSK) are Cytoplasmic-facing. Residues 279–299 (LPVPIPIELIMTVIATGISYG) traverse the membrane as a helical segment. Over 300-335 (CNFEQRFGVAVVGNMSLGFQPPITPSVEVFQDTIGD) the chain is Extracellular. Residues 336-356 (CFGIAIVGFAVAFSVASVYSL) traverse the membrane as a helical segment. Residues 357–367 (KYDYPIDGNQE) lie on the Cytoplasmic side of the membrane. A helical membrane pass occupies residues 368–388 (LIALGVSNIFTGAFKGFAGST). Residues 389 to 404 (ALSRSGVQESTGGKTQ) are Extracellular-facing. Residues 405 to 425 (VAGLLSAVIVLIVIVAIGFLL) form a helical membrane-spanning segment. The Cytoplasmic segment spans residues 426-462 (QPLQKSVLAALALGNLKGMLMQFAEIGRLWKKDKYDC). Residues 463-483 (LIWIMTFIFAIVLGLGLGLAA) traverse the membrane as a helical segment. Over 484-757 (SVAFQLLTIV…ECQVPVETKF (274 aa)) the chain is Extracellular. In terms of domain architecture, STAS spans 518–713 (NYADVYEPEG…LTIHDAILHI (196 aa)). The PDZ-binding motif lies at 754–757 (ETKF).

It belongs to the SLC26A/SulP transporter (TC 2.A.53) family. As to quaternary structure, interacts with PDZK1, CFTR, SLC26A6 and NHERF1. Interacts (via PDZ-binding motif) with NHERF4 (via the third PDZ domain); interaction leads to decreased expression of SLC26A3 on the cell membrane resulting in its reduced exchanger activity. N-glycosylation is required for efficient cell surface expression, and protection from proteolytic degradation.

It is found in the apical cell membrane. Its subcellular location is the membrane. The protein localises to the cell membrane. It carries out the reaction hydrogencarbonate(in) + 2 chloride(out) = hydrogencarbonate(out) + 2 chloride(in). Mediates chloride-bicarbonate exchange with a chloride bicarbonate stoichiometry of 2:1 in the intestinal epithelia. Plays a role in the chloride and bicarbonate homeostasis during sperm epididymal maturation and capacitation. This is Chloride anion exchanger (Slc26a3) from Rattus norvegicus (Rat).